A 275-amino-acid polypeptide reads, in one-letter code: uncharacterized protein (275 aa).

The region spanning 171-268 (KMVCEFLEEH…GLTPKQYMKI (98 aa)) is the HTH araC/xylS-type domain. DNA-binding regions (H-T-H motif) lie at residues 188 to 209 (NDLS…TKQK) and 235 to 258 (PIDA…KRQV).

This is an uncharacterized protein from Bacillus subtilis (strain 168).